Reading from the N-terminus, the 244-residue chain is 7-cyano-7-deazaguanine synthase (244 aa).

An ATP-binding site is contributed by 19–29 (FSGGQDSTTCL). Positions 207, 222, 225, and 228 each coordinate Zn(2+).

The protein belongs to the QueC family. It depends on Zn(2+) as a cofactor.

It carries out the reaction 7-carboxy-7-deazaguanine + NH4(+) + ATP = 7-cyano-7-deazaguanine + ADP + phosphate + H2O + H(+). It functions in the pathway purine metabolism; 7-cyano-7-deazaguanine biosynthesis. Functionally, catalyzes the ATP-dependent conversion of 7-carboxy-7-deazaguanine (CDG) to 7-cyano-7-deazaguanine (preQ(0)). This chain is 7-cyano-7-deazaguanine synthase, found in Bordetella avium (strain 197N).